The following is a 477-amino-acid chain: Secreted RxLR effector protein 102 (477 aa).

The signal sequence occupies residues 1–20; sequence MRGGYYVLTALFVVASSEIA. The RxLR-dEER signature appears at 48-65; it reads RFLRESRGVHGNVANEER. 4 disordered regions span residues 326–345, 351–370, 376–401, and 433–455; these read SKGQ…TSKG, IKRS…LPSI, SSKS…KRSR, and PRSA…APSS.

It belongs to the RxLR effector family.

It localises to the secreted. It is found in the host nucleus. In terms of biological role, secreted effector that acts as an elicitor that induces cell death in host plant cells. The sequence is that of Secreted RxLR effector protein 102 from Plasmopara viticola (Downy mildew of grapevine).